A 67-amino-acid chain; its full sequence is Alpha-conotoxin-like Qc1.1a (67 aa).

Residues 1–21 (MGMRMMFTMFLLVVLAITVVS) form the signal peptide. The propeptide occupies 22–46 (FTSDHASDGRNTAANDKASNLMALR). Disulfide bonds link cysteine 49-cysteine 55 and cysteine 50-cysteine 63. A lacks the Ser-Xaa-Pro motif that is crucial for potent interaction with nAChR region spans residues 51-53 (PDP).

The protein belongs to the conotoxin A superfamily. Expressed by the venom duct.

Its subcellular location is the secreted. In terms of biological role, alpha-conotoxins act on postsynaptic membranes, they bind to the nicotinic acetylcholine receptors (nAChR) and thus inhibit them. Has possibly a distinct nAChR binding mode from other alpha-conotoxins, due to a different three residue motif (lacks the Ser-Xaa-Pro motif). The protein is Alpha-conotoxin-like Qc1.1a of Conus quercinus (Oak cone).